The following is a 382-amino-acid chain: UDP-N-acetylglucosamine--N-acetylmuramyl-(pentapeptide) pyrophosphoryl-undecaprenol N-acetylglucosamine transferase (382 aa).

Residues 17–19 (TAG), Asn-137, Arg-179, Ser-213, and Gln-308 each bind UDP-N-acetyl-alpha-D-glucosamine.

This sequence belongs to the glycosyltransferase 28 family. MurG subfamily.

It is found in the cell membrane. It catalyses the reaction di-trans,octa-cis-undecaprenyl diphospho-N-acetyl-alpha-D-muramoyl-L-alanyl-D-glutamyl-meso-2,6-diaminopimeloyl-D-alanyl-D-alanine + UDP-N-acetyl-alpha-D-glucosamine = di-trans,octa-cis-undecaprenyl diphospho-[N-acetyl-alpha-D-glucosaminyl-(1-&gt;4)]-N-acetyl-alpha-D-muramoyl-L-alanyl-D-glutamyl-meso-2,6-diaminopimeloyl-D-alanyl-D-alanine + UDP + H(+). Its pathway is cell wall biogenesis; peptidoglycan biosynthesis. Functionally, cell wall formation. Catalyzes the transfer of a GlcNAc subunit on undecaprenyl-pyrophosphoryl-MurNAc-pentapeptide (lipid intermediate I) to form undecaprenyl-pyrophosphoryl-MurNAc-(pentapeptide)GlcNAc (lipid intermediate II). This chain is UDP-N-acetylglucosamine--N-acetylmuramyl-(pentapeptide) pyrophosphoryl-undecaprenol N-acetylglucosamine transferase, found in Rhodococcus jostii (strain RHA1).